Reading from the N-terminus, the 291-residue chain is Glycine--tRNA ligase alpha subunit (291 aa).

This sequence belongs to the class-II aminoacyl-tRNA synthetase family. Tetramer of two alpha and two beta subunits.

Its subcellular location is the cytoplasm. It carries out the reaction tRNA(Gly) + glycine + ATP = glycyl-tRNA(Gly) + AMP + diphosphate. The polypeptide is Glycine--tRNA ligase alpha subunit (Microcystis aeruginosa (strain NIES-843 / IAM M-2473)).